Consider the following 243-residue polypeptide: Uridylate kinase (243 aa).

Position 15–18 (15–18 (KLSG)) interacts with ATP. Residue G56 participates in UMP binding. Positions 57 and 61 each coordinate ATP. 138–145 (TGNPYFST) lines the UMP pocket. Residues N166, Y172, and D175 each coordinate ATP.

The protein belongs to the UMP kinase family. Homohexamer.

Its subcellular location is the cytoplasm. The catalysed reaction is UMP + ATP = UDP + ADP. It participates in pyrimidine metabolism; CTP biosynthesis via de novo pathway; UDP from UMP (UMPK route): step 1/1. Inhibited by UTP. Its function is as follows. Catalyzes the reversible phosphorylation of UMP to UDP. This Mycoplasma genitalium (strain ATCC 33530 / DSM 19775 / NCTC 10195 / G37) (Mycoplasmoides genitalium) protein is Uridylate kinase.